A 1102-amino-acid chain; its full sequence is Coiled-coil domain-containing protein AGAP005037 (1102 aa).

The span at 1–11 (MLIRWKSKDKS) shows a compositional bias: basic and acidic residues. 2 disordered regions span residues 1–69 (MLIR…HTLG) and 295–318 (HKSKQPTKTPYYVGTTQTLPRGMY). A compositionally biased stretch (low complexity) spans 12-21 (SSSTSSSSST). Basic and acidic residues predominate over residues 50–65 (IDDRRRSARSREDPRR). Positions 405 to 430 (HRIRVEHMERQLANLTGLVQKALTQN) form a coiled coil. 2 disordered regions span residues 450–475 (RNAEATGDGTVCTREKPPKLGKSTCH) and 489–539 (DIQG…PLVM). Coiled-coil stretches lie at residues 554–579 (EVYNQLRGLQKKAMDLRTEVRTLRRL) and 614–654 (DKER…EVIN). 3 disordered regions span residues 745–774 (LPIPDTAGTDETIKPPETHNNVNKPIPSPR), 832–958 (TKIS…CSDN), and 1031–1087 (LCGG…TLPP). Residues 832–849 (TKISQSQLYPSEPVSSNV) are compositionally biased toward polar residues. Residues 867–881 (PPQPTRPTTGKPPVP) are compositionally biased toward pro residues. Low complexity predominate over residues 904-918 (TSSRSPLASPTSPHV). Residues 936–958 (DCEQQQRTSEGTDSGSESVCSDN) are compositionally biased toward polar residues.

The polypeptide is Coiled-coil domain-containing protein AGAP005037 (Anopheles gambiae (African malaria mosquito)).